The primary structure comprises 337 residues: Heat-inducible transcription repressor HrcA (337 aa).

The protein belongs to the HrcA family.

Negative regulator of class I heat shock genes (grpE-dnaK-dnaJ and groELS operons). Prevents heat-shock induction of these operons. This Arthrobacter sp. (strain FB24) protein is Heat-inducible transcription repressor HrcA.